The chain runs to 495 residues: Zinc finger and SCAN domain-containing protein 5B (495 aa).

Residues 1–40 are disordered; sequence MAANWTLSWGQGGPCNSPGSDTPRSVASPETQLGNHDRNP. Residues 17-34 show a composition bias toward polar residues; sequence SPGSDTPRSVASPETQLG. Residues 44–126 form the SCAN box domain; that stretch reads HMNFRMFSCP…DLLRNNRRPK (83 aa). Disordered regions lie at residues 150–183 and 227–347; these read APAS…RREQ and ENRE…PDGQ. Residues 161–173 show a composition bias toward polar residues; that stretch reads VSSQWASSVNQMH. Basic and acidic residues predominate over residues 250–262; sequence RAKEGKEPQKRAS. Polar residues predominate over residues 292 to 310; it reads NLSSPKRSKPDASSISQEE. 5 consecutive C2H2-type zinc fingers follow at residues 355–377, 383–405, 411–433, 439–461, and 467–489; these read FACD…RRSH, FQCD…QRVH, YMCD…KRIH, FKCK…QRTH, and YKCP…LKTH.

The protein localises to the nucleus. Functionally, may be involved in transcriptional regulation. This is Zinc finger and SCAN domain-containing protein 5B (ZSCAN5B) from Homo sapiens (Human).